The following is a 359-amino-acid chain: MNQRKIIHVDMDAFYASIEQRDHPEYRGKPIAVGRPEMRGVVAAASYEARRFGVRSAMPSMKALKLCPHLIFTRNRMDVYKAVSAQIHAIFHRYTDLVEPLSLDEAFLDVTENKPGIPLAVDIARRIKKEIRRELHLTASAGVSYNKFLAKIASDYRKPDGLFTIHPSRAEKFIAALPIEAFWGVGHATAERMRALSITNGAQLRARDKDFLVRHFGKTGAIFYNFARGVDDRPVEPSRMRKSVGCEETYRENVTRAEALEQRLPLLAEELAGRLARSGFRGNTLTLKVKFPDFVQKTRCATVPEILTEKEGILPLARTLMEELDSGDRTFRLLGLSVSHPQEEQRQGIWEQLWLELEY.

The UmuC domain maps to 6-186; the sequence is IIHVDMDAFY…LPIEAFWGVG (181 aa). Asp10 and Asp104 together coordinate Mg(2+). Residue Glu105 is part of the active site.

Belongs to the DNA polymerase type-Y family. As to quaternary structure, monomer. Mg(2+) is required as a cofactor.

The protein resides in the cytoplasm. The enzyme catalyses DNA(n) + a 2'-deoxyribonucleoside 5'-triphosphate = DNA(n+1) + diphosphate. In terms of biological role, poorly processive, error-prone DNA polymerase involved in untargeted mutagenesis. Copies undamaged DNA at stalled replication forks, which arise in vivo from mismatched or misaligned primer ends. These misaligned primers can be extended by PolIV. Exhibits no 3'-5' exonuclease (proofreading) activity. May be involved in translesional synthesis, in conjunction with the beta clamp from PolIII. This chain is DNA polymerase IV, found in Akkermansia muciniphila (strain ATCC BAA-835 / DSM 22959 / JCM 33894 / BCRC 81048 / CCUG 64013 / CIP 107961 / Muc).